Consider the following 647-residue polypeptide: Probable squalene--hopene cyclase (647 aa).

The stretch at 67–108 (EAKIGNYLRRTQGAHGGWPLVHDGPFDMSASVKSYFALKMIG) is one PFTB 1 repeat. Aspartate 388 serves as the catalytic Proton donor. PFTB repeat units follow at residues 413 to 454 (IARG…GALL) and 530 to 577 (IRKA…ALLG).

It belongs to the terpene cyclase/mutase family.

It catalyses the reaction squalene = hop-22(29)-ene. The enzyme catalyses squalene + H2O = hopan-22-ol. Its pathway is secondary metabolite biosynthesis; hopanoid biosynthesis. Catalyzes the cyclization of squalene into hopene. Probably part of an operon y4aABCD involved in the synthesis of an isoprenoid compound. This chain is Probable squalene--hopene cyclase (shc), found in Sinorhizobium fredii (strain NBRC 101917 / NGR234).